The primary structure comprises 456 residues: Enolase (456 aa).

Gln164 provides a ligand contact to (2R)-2-phosphoglycerate. The active-site Proton donor is Glu207. Asp244, Glu287, and Asp314 together coordinate Mg(2+). (2R)-2-phosphoglycerate is bound by residues Lys339, Arg368, Ser369, and Lys390. The active-site Proton acceptor is the Lys339.

It belongs to the enolase family. As to quaternary structure, component of the RNA degradosome, a multiprotein complex involved in RNA processing and mRNA degradation. Mg(2+) serves as cofactor.

The protein localises to the cytoplasm. It localises to the secreted. It is found in the cell surface. It carries out the reaction (2R)-2-phosphoglycerate = phosphoenolpyruvate + H2O. The protein operates within carbohydrate degradation; glycolysis; pyruvate from D-glyceraldehyde 3-phosphate: step 4/5. In terms of biological role, catalyzes the reversible conversion of 2-phosphoglycerate (2-PG) into phosphoenolpyruvate (PEP). It is essential for the degradation of carbohydrates via glycolysis. This is Enolase from Francisella tularensis subsp. tularensis (strain FSC 198).